The chain runs to 274 residues: MAIVKCKPTSPGRRHVVKIVNADLHKGKPYAPLLEKNSKSGGRNNNGRITVRHVGGGHKQHYRLIDFKRTKDGIPAIVERLEYDPNRSANIALVLFADGERRYIIAPKGLKAGDTVQSGVDAPIKAGNCLPLRNIPVGSTVHCVELKPGKGAQVARSAGAYAQIIARDGAYVTLRLRSGEMRKVLSEGRATIGEVGNSEHMLRELGKAGATRWRGVRPTVRGVAMNPVDHPHGGGEGRTSGGRHPVSPWGMPTKGFKTRKNKSTDKYIVRRRNK.

The interval 223–274 is disordered; that stretch reads VAMNPVDHPHGGGEGRTSGGRHPVSPWGMPTKGFKTRKNKSTDKYIVRRRNK.

Belongs to the universal ribosomal protein uL2 family. Part of the 50S ribosomal subunit. Forms a bridge to the 30S subunit in the 70S ribosome.

In terms of biological role, one of the primary rRNA binding proteins. Required for association of the 30S and 50S subunits to form the 70S ribosome, for tRNA binding and peptide bond formation. It has been suggested to have peptidyltransferase activity; this is somewhat controversial. Makes several contacts with the 16S rRNA in the 70S ribosome. The polypeptide is Large ribosomal subunit protein uL2 (Aliivibrio salmonicida (strain LFI1238) (Vibrio salmonicida (strain LFI1238))).